The following is a 146-amino-acid chain: Acidic phospholipase A2 2 (146 aa).

A signal peptide spans M1 to S21. A propeptide spanning residues N22 to L27 is cleaved from the precursor. Disulfide bonds link C38-C98, C53-C145, C55-C71, C70-C126, C77-C119, C87-C112, and C105-C117. Positions 54, 56, and 58 each coordinate Ca(2+). Residue H74 is part of the active site. D75 contributes to the Ca(2+) binding site. The active site involves D120.

The protein belongs to the phospholipase A2 family. Group I subfamily. D49 sub-subfamily. Ca(2+) serves as cofactor. In terms of tissue distribution, expressed by the venom gland.

It localises to the secreted. It carries out the reaction a 1,2-diacyl-sn-glycero-3-phosphocholine + H2O = a 1-acyl-sn-glycero-3-phosphocholine + a fatty acid + H(+). In terms of biological role, PLA2 catalyzes the calcium-dependent hydrolysis of the 2-acyl groups in 3-sn-phosphoglycerides. In Naja kaouthia (Monocled cobra), this protein is Acidic phospholipase A2 2.